A 553-amino-acid chain; its full sequence is Glutamine--tRNA ligase (553 aa).

A 'HIGH' region motif is present at residues 34-44 (PEPNGYLHIGH). Residues 35 to 37 (EPN) and 41 to 47 (HIGHAKS) each bind ATP. Positions 68 and 213 each coordinate L-glutamine. ATP is bound by residues Thr232 and 262-263 (RL). Residues 269–273 (LTSKR) carry the 'KMSKS' region motif.

Belongs to the class-I aminoacyl-tRNA synthetase family. Monomer.

It is found in the cytoplasm. It carries out the reaction tRNA(Gln) + L-glutamine + ATP = L-glutaminyl-tRNA(Gln) + AMP + diphosphate. The chain is Glutamine--tRNA ligase from Psychromonas ingrahamii (strain DSM 17664 / CCUG 51855 / 37).